The chain runs to 246 residues: MKEFITKHRDKFQKISAISGAGISAESGIPTFRGSEGLWKNFRAEDLATPQAFSKNPKLVWEWYLWRRNIIETKRPNPGHFALVELERIHPDFFLITQNVDGLHSQAGSKKLTEIHGNIFINRCISCGQESKETISENTTPLPPQCQNCNSFLRPGVVWFGESYDDFKLNLSIQRMKHTDLLLVLGTSGSVSMPVYLAQIAKDSGALLIEINPERSSFSSSVDLFLQGKTGEVLPELIREILDNPS.

The 245-residue stretch at 1–245 folds into the Deacetylase sirtuin-type domain; sequence MKEFITKHRD…ELIREILDNP (245 aa). 20 to 39 contacts NAD(+); the sequence is GAGISAESGIPTFRGSEGLW. Residues Tyr64 and Arg67 each contribute to the substrate site. 98–101 lines the NAD(+) pocket; that stretch reads QNVD. The active-site Proton acceptor is the His116. Cys124, Cys127, Cys146, and Cys149 together coordinate Zn(2+). NAD(+) is bound by residues 186–188, 212–214, and Thr230; these read GTS and NPE.

This sequence belongs to the sirtuin family. Class III subfamily. Zn(2+) is required as a cofactor.

It localises to the cytoplasm. The enzyme catalyses N(6)-acetyl-L-lysyl-[protein] + NAD(+) + H2O = 2''-O-acetyl-ADP-D-ribose + nicotinamide + L-lysyl-[protein]. It catalyses the reaction N(6)-succinyl-L-lysyl-[protein] + NAD(+) + H2O = 2''-O-succinyl-ADP-D-ribose + nicotinamide + L-lysyl-[protein]. Functionally, NAD-dependent lysine deacetylase and desuccinylase that specifically removes acetyl and succinyl groups on target proteins. Modulates the activities of several proteins which are inactive in their acylated form. The polypeptide is NAD-dependent protein deacylase (Leptospira interrogans serogroup Icterohaemorrhagiae serovar Lai (strain 56601)).